The chain runs to 295 residues: sn-glycerol-3-phosphate transport system permease protein UgpA (295 aa).

The Cytoplasmic segment spans residues 1 to 11 (MSSSRPVFRSR). The helical transmembrane segment at 12–32 (WLPYLLVAPQLIITVIFFIWP) threads the bilayer. Residues 33-80 (AGEALWYSLQSVDPFGFSSQFVGLDNFVTLFHDSYYLDSFWTTIKFST) are Periplasmic-facing. The ABC transmembrane type-1 domain occupies 76–284 (IKFSTFVTVS…FLVIVLTVVQ (209 aa)). The chain crosses the membrane as a helical span at residues 81-101 (FVTVSGLLVSLFFAALVEYIV). The Cytoplasmic portion of the chain corresponds to 102–109 (RGSRFYQT). A helical transmembrane segment spans residues 110 to 130 (LMLLPYAVAPAVAAVLWIFLF). The Periplasmic segment spans residues 131–156 (NPGRGLITHFLAEFGYDWNHAQNSGQ). The chain crosses the membrane as a helical span at residues 157-177 (AMFLVVFASVWKQISYNFLFF). Over 178–207 (YAALQSIPRSLIEAAAIDGAGPIRRFFKIA) the chain is Cytoplasmic. The helical transmembrane segment at 208 to 228 (LPLIAPVSFFLLVVNLVYAFF) threads the bilayer. At 229-262 (DTFPVIDAATSGGPVQATTTLIYKIYREGFTGLD) the chain is on the periplasmic side. Residues 263-283 (LASSAAQSMVLMFLVIVLTVV) form a helical membrane-spanning segment. The Cytoplasmic portion of the chain corresponds to 284-295 (QFRYVESKVRYQ).

It belongs to the binding-protein-dependent transport system permease family. UgpAE subfamily. As to quaternary structure, the complex is composed of two ATP-binding proteins (UgpC), two transmembrane proteins (UgpA and UgpE) and a solute-binding protein (UgpB).

The protein localises to the cell inner membrane. Part of the ABC transporter complex UgpBAEC involved in sn-glycerol-3-phosphate (G3P) import. Probably responsible for the translocation of the substrate across the membrane. The polypeptide is sn-glycerol-3-phosphate transport system permease protein UgpA (ugpA) (Shigella flexneri).